We begin with the raw amino-acid sequence, 682 residues long: DNA ligase (682 aa).

Residues 42-46, 91-92, and E124 contribute to the NAD(+) site; these read DAEYD and SL. K126 (N6-AMP-lysine intermediate) is an active-site residue. R147, E184, K302, and K326 together coordinate NAD(+). Positions 420, 423, 438, and 444 each coordinate Zn(2+). The BRCT domain occupies 603–682; it reads IADNPLKGKS…QEFIALTGEN (80 aa).

The protein belongs to the NAD-dependent DNA ligase family. LigA subfamily. It depends on Mg(2+) as a cofactor. Mn(2+) serves as cofactor.

It carries out the reaction NAD(+) + (deoxyribonucleotide)n-3'-hydroxyl + 5'-phospho-(deoxyribonucleotide)m = (deoxyribonucleotide)n+m + AMP + beta-nicotinamide D-nucleotide.. In terms of biological role, DNA ligase that catalyzes the formation of phosphodiester linkages between 5'-phosphoryl and 3'-hydroxyl groups in double-stranded DNA using NAD as a coenzyme and as the energy source for the reaction. It is essential for DNA replication and repair of damaged DNA. The protein is DNA ligase of Actinobacillus pleuropneumoniae serotype 3 (strain JL03).